We begin with the raw amino-acid sequence, 187 residues long: MATTADFKNGLVLVIDGQLWTITEFQHVKPGKGPAFVRTKLKNVLSGKVVDKTFNAGVKVDTATVDRRDTTYLYRDGSDFVFMDSQDYEQHPLPEALVGDAARFLLEGMPVQVAFHNGVPLYIELPVTVELEVTHTEPGLQGDRSSAGTKPATLQTGAQINVPLFINTGDKLKVDSRDGSYLGRVNA.

It belongs to the elongation factor P family.

It localises to the cytoplasm. It functions in the pathway protein biosynthesis; polypeptide chain elongation. Its function is as follows. Involved in peptide bond synthesis. Stimulates efficient translation and peptide-bond synthesis on native or reconstituted 70S ribosomes in vitro. Probably functions indirectly by altering the affinity of the ribosome for aminoacyl-tRNA, thus increasing their reactivity as acceptors for peptidyl transferase. In Mycobacterium bovis (strain ATCC BAA-935 / AF2122/97), this protein is Elongation factor P (efp).